Reading from the N-terminus, the 405-residue chain is uncharacterized protein (405 aa).

The signal sequence occupies residues 1-34; it reads MNKFLKYFLILLALVLIVVPIVFATLLFKTSQDA. The segment covering 348–359 has biased composition (basic and acidic residues); the sequence is EQNDTTDKDKTS. The interval 348-405 is disordered; it reads EQNDTTDKDKTSNENSDSTNNSDSSNQQQPATDQNSNQNQGGTQQAPQASNNQNGVVN. 2 stretches are compositionally biased toward low complexity: residues 360–373 and 381–392; these read NENSDSTNNSDSSN and QNSNQNQGGTQQ. The segment covering 393–405 has biased composition (polar residues); the sequence is APQASNNQNGVVN.

It belongs to the LytR/CpsA/Psr (LCP) family.

This is an uncharacterized protein from Staphylococcus aureus (strain NCTC 8325 / PS 47).